We begin with the raw amino-acid sequence, 47 residues long: Large ribosomal subunit protein bL34 (47 aa).

This sequence belongs to the bacterial ribosomal protein bL34 family.

This chain is Large ribosomal subunit protein bL34, found in Corynebacterium jeikeium (strain K411).